Reading from the N-terminus, the 58-residue chain is Large ribosomal subunit protein bL32 (58 aa).

It belongs to the bacterial ribosomal protein bL32 family.

In Thermobifida fusca (strain YX), this protein is Large ribosomal subunit protein bL32.